Consider the following 256-residue polypeptide: tRNA (guanine-N(7)-)-methyltransferase (256 aa).

Residues 1 to 11 show a composition bias toward polar residues; the sequence is MHPQDASTEQT. The tract at residues 1–35 is disordered; sequence MHPQDASTEQTPVDDDQVESSQPVHAPEDVAHPRR. E85, E110, D137, and D160 together coordinate S-adenosyl-L-methionine. The active site involves D160. K164 contributes to the substrate binding site. The interaction with RNA stretch occupies residues 166–171; it reads RHNKRR. Substrate is bound by residues D196 and 234 to 237; that span reads TKFE.

The protein belongs to the class I-like SAM-binding methyltransferase superfamily. TrmB family.

It carries out the reaction guanosine(46) in tRNA + S-adenosyl-L-methionine = N(7)-methylguanosine(46) in tRNA + S-adenosyl-L-homocysteine. It functions in the pathway tRNA modification; N(7)-methylguanine-tRNA biosynthesis. In terms of biological role, catalyzes the formation of N(7)-methylguanine at position 46 (m7G46) in tRNA. The polypeptide is tRNA (guanine-N(7)-)-methyltransferase (Cupriavidus pinatubonensis (strain JMP 134 / LMG 1197) (Cupriavidus necator (strain JMP 134))).